Reading from the N-terminus, the 257-residue chain is Short-chain dehydrogenase reductase 3b (257 aa).

12-36 is a binding site for NAD(+); it reads IITGGASGIGAESVRLFTEHGARVV. A substrate-binding site is contributed by serine 144. The active-site Proton acceptor is tyrosine 157.

Belongs to the short-chain dehydrogenases/reductases (SDR) family.

This Arabidopsis thaliana (Mouse-ear cress) protein is Short-chain dehydrogenase reductase 3b (SDR3b).